The primary structure comprises 418 residues: Gamma-glutamyl phosphate reductase (418 aa).

Belongs to the gamma-glutamyl phosphate reductase family.

It is found in the cytoplasm. It carries out the reaction L-glutamate 5-semialdehyde + phosphate + NADP(+) = L-glutamyl 5-phosphate + NADPH + H(+). It functions in the pathway amino-acid biosynthesis; L-proline biosynthesis; L-glutamate 5-semialdehyde from L-glutamate: step 2/2. Catalyzes the NADPH-dependent reduction of L-glutamate 5-phosphate into L-glutamate 5-semialdehyde and phosphate. The product spontaneously undergoes cyclization to form 1-pyrroline-5-carboxylate. In Clostridium acetobutylicum (strain ATCC 824 / DSM 792 / JCM 1419 / IAM 19013 / LMG 5710 / NBRC 13948 / NRRL B-527 / VKM B-1787 / 2291 / W), this protein is Gamma-glutamyl phosphate reductase.